A 441-amino-acid chain; its full sequence is Histidinol dehydrogenase (441 aa).

3 residues coordinate NAD(+): Y136, Q197, and N220. Residues S243, Q265, and H268 each contribute to the substrate site. Residues Q265 and H268 each contribute to the Zn(2+) site. Active-site proton acceptor residues include E333 and H334. The substrate site is built by H334, D367, E421, and H426. A Zn(2+)-binding site is contributed by D367. H426 contributes to the Zn(2+) binding site.

It belongs to the histidinol dehydrogenase family. It depends on Zn(2+) as a cofactor.

It catalyses the reaction L-histidinol + 2 NAD(+) + H2O = L-histidine + 2 NADH + 3 H(+). Its pathway is amino-acid biosynthesis; L-histidine biosynthesis; L-histidine from 5-phospho-alpha-D-ribose 1-diphosphate: step 9/9. Catalyzes the sequential NAD-dependent oxidations of L-histidinol to L-histidinaldehyde and then to L-histidine. The protein is Histidinol dehydrogenase of Pseudomonas fluorescens (strain Pf0-1).